Here is a 359-residue protein sequence, read N- to C-terminus: Guanine nucleotide-binding protein G(o) subunit alpha (359 aa).

Positions 1–26 are disordered; it reads MGGCVSATPEEREAKTRSSVIDRQQR. Gly2 is lipidated: N-myristoyl glycine. Cys4 carries S-palmitoyl cysteine lipidation. Positions 34–359 constitute a G-alpha domain; the sequence is NTIKILLLGA…RENLEAANLL (326 aa). A G1 motif region spans residues 37-50; it reads KILLLGAGESGKST. Residues 42–49, 178–184, 203–207, 272–275, and Ala331 each bind GTP; these read GAGESGKS, LRSRVQT, DVGGQ, and NKAD. 2 residues coordinate Mg(2+): Ser49 and Thr184. The tract at residues 176-184 is G2 motif; it reads DVLRSRVQT. The segment at 199 to 208 is G3 motif; it reads YRVVDVGGQR. The segment at 268–275 is G4 motif; it reads ILFLNKAD. Residues 329 to 334 form a G5 motif region; it reads TTATDT.

Belongs to the G-alpha family. G(i/o/t/z) subfamily. G proteins are composed of 3 units; alpha, beta and gamma. The alpha chain contains the guanine nucleotide binding site.

Functionally, guanine nucleotide-binding proteins (G proteins) are involved as modulators or transducers in various transmembrane signaling systems. The G(o) protein function is not clear. The sequence is that of Guanine nucleotide-binding protein G(o) subunit alpha from Geodia cydonium (Sponge).